The sequence spans 502 residues: Protein nucleotidyltransferase YdiU (502 aa).

ATP contacts are provided by G98, G100, R101, K121, D133, G134, R184, and R191. Catalysis depends on D260, which acts as the Proton acceptor. The Mg(2+) site is built by N261 and D270. D270 contributes to the ATP binding site.

It belongs to the SELO family. The cofactor is Mg(2+). Requires Mn(2+) as cofactor.

It catalyses the reaction L-seryl-[protein] + ATP = 3-O-(5'-adenylyl)-L-seryl-[protein] + diphosphate. The catalysed reaction is L-threonyl-[protein] + ATP = 3-O-(5'-adenylyl)-L-threonyl-[protein] + diphosphate. The enzyme catalyses L-tyrosyl-[protein] + ATP = O-(5'-adenylyl)-L-tyrosyl-[protein] + diphosphate. It carries out the reaction L-histidyl-[protein] + UTP = N(tele)-(5'-uridylyl)-L-histidyl-[protein] + diphosphate. It catalyses the reaction L-seryl-[protein] + UTP = O-(5'-uridylyl)-L-seryl-[protein] + diphosphate. The catalysed reaction is L-tyrosyl-[protein] + UTP = O-(5'-uridylyl)-L-tyrosyl-[protein] + diphosphate. In terms of biological role, nucleotidyltransferase involved in the post-translational modification of proteins. It can catalyze the addition of adenosine monophosphate (AMP) or uridine monophosphate (UMP) to a protein, resulting in modifications known as AMPylation and UMPylation. The protein is Protein nucleotidyltransferase YdiU of Rhizobium rhizogenes (strain K84 / ATCC BAA-868) (Agrobacterium radiobacter).